The chain runs to 39 residues: Cytochrome b559 subunit beta (39 aa).

A helical membrane pass occupies residues 14–30 (WLAIHGLAVPTVFFLGS). His18 is a binding site for heme.

Belongs to the PsbE/PsbF family. As to quaternary structure, heterodimer of an alpha subunit and a beta subunit. PSII is composed of 1 copy each of membrane proteins PsbA, PsbB, PsbC, PsbD, PsbE, PsbF, PsbH, PsbI, PsbJ, PsbK, PsbL, PsbM, PsbT, PsbX, PsbY, PsbZ, Psb30/Ycf12, at least 3 peripheral proteins of the oxygen-evolving complex and a large number of cofactors. It forms dimeric complexes. Requires heme b as cofactor.

It is found in the plastid. The protein localises to the chloroplast thylakoid membrane. Functionally, this b-type cytochrome is tightly associated with the reaction center of photosystem II (PSII). PSII is a light-driven water:plastoquinone oxidoreductase that uses light energy to abstract electrons from H(2)O, generating O(2) and a proton gradient subsequently used for ATP formation. It consists of a core antenna complex that captures photons, and an electron transfer chain that converts photonic excitation into a charge separation. The sequence is that of Cytochrome b559 subunit beta from Ephedra sinica (Chinese ephedra).